Reading from the N-terminus, the 70-residue chain is Delta-hexatoxin-Mg1b (70 aa).

A signal peptide spans 1 to 26; that stretch reads MKILEKALLENDSAAEEESRNLRTKR. Intrachain disulfides connect Cys-27/Cys-41, Cys-34/Cys-46, Cys-40/Cys-57, and Cys-42/Cys-68.

In terms of tissue distribution, expressed by the venom gland.

The protein localises to the secreted. In terms of biological role, inhibits tetrodotoxin-sensitive sodium channels (Nav). Intracranial injection into mice causes strong convulsions and death. Intrathorax injection into crickets causes paralysis prolonged for 2 minutes, followed by recovery. This Macrothele gigas (Japanese funnel web spider) protein is Delta-hexatoxin-Mg1b.